Consider the following 84-residue polypeptide: Toxin To10 (84 aa).

A signal peptide spans 1 to 19 (MNYSTLIAVASLLTAGTES). Positions 21-80 (KDGYPVEGSCAFPCGYDNAYCDKLCKERKADSGYCYWVNILCYCYGLPDNAAIKGYGRCK) constitute an LCN-type CS-alpha/beta domain. Disulfide bonds link C30/C79, C34/C55, C41/C62, and C45/C64. Residue P81 is modified to Proline amide.

The protein belongs to the long (4 C-C) scorpion toxin superfamily. Sodium channel inhibitor family. Alpha subfamily. In terms of tissue distribution, expressed by the venom gland.

It is found in the secreted. In terms of biological role, alpha toxins bind voltage-independently at site-3 of sodium channels (Nav) and inhibit the inactivation of the activated channels, thereby blocking neuronal transmission. In Tityus obscurus (Amazonian scorpion), this protein is Toxin To10.